A 106-amino-acid polypeptide reads, in one-letter code: UPF0145 protein azo0572 (106 aa).

This sequence belongs to the UPF0145 family.

The protein is UPF0145 protein azo0572 of Azoarcus sp. (strain BH72).